Here is a 364-residue protein sequence, read N- to C-terminus: Chorismate synthase (364 aa).

Arg48 lines the NADP(+) pocket. FMN is bound by residues 126–128, Gly288, 303–307, and Arg329; these read RSS and KPIAS.

The protein belongs to the chorismate synthase family. As to quaternary structure, homotetramer. Requires FMNH2 as cofactor.

It carries out the reaction 5-O-(1-carboxyvinyl)-3-phosphoshikimate = chorismate + phosphate. Its pathway is metabolic intermediate biosynthesis; chorismate biosynthesis; chorismate from D-erythrose 4-phosphate and phosphoenolpyruvate: step 7/7. Catalyzes the anti-1,4-elimination of the C-3 phosphate and the C-6 proR hydrogen from 5-enolpyruvylshikimate-3-phosphate (EPSP) to yield chorismate, which is the branch point compound that serves as the starting substrate for the three terminal pathways of aromatic amino acid biosynthesis. This reaction introduces a second double bond into the aromatic ring system. The chain is Chorismate synthase from Desulfovibrio desulfuricans (strain ATCC 27774 / DSM 6949 / MB).